The primary structure comprises 113 residues: UPF0122 protein Sez_1013 (113 aa).

This sequence belongs to the UPF0122 family.

In terms of biological role, might take part in the signal recognition particle (SRP) pathway. This is inferred from the conservation of its genetic proximity to ftsY/ffh. May be a regulatory protein. In Streptococcus equi subsp. zooepidemicus (strain MGCS10565), this protein is UPF0122 protein Sez_1013.